The primary structure comprises 295 residues: MKSRFENALASAPESLSRHLAPIILAADFDASLSTVQFDELLKQTGMTDNQLRVALLPFAAAYSYAPISEFYVGAIVRGLSGTLYFGANMEFDGVQLGQTVHAEQSAISHAWMKGEQGLSDITINFSPCGHCRQFMNELSSAKELKIQLPEREEKKLHDYLPDSFGPSDLGIESALMSQVHHGFATEDDDALMQRAVEAMNRSHAPYTHNLSGVALQTESGRVYLGAYAENAAFNPSLPPLQVALIQLLLAGERFENIQSAALVESHKGKISHLACTQSTLEALNPDIPVSYLSL.

CMP/dCMP-type deaminase domains follow at residues 48–168 and 187–295; these read TDNQ…FGPS and EDDD…YLSL. A substrate-binding site is contributed by 89-91; that stretch reads NME. H102 serves as a coordination point for Zn(2+). E104 (proton donor) is an active-site residue. Residues C129 and C132 each contribute to the Zn(2+) site.

It belongs to the cytidine and deoxycytidylate deaminase family. In terms of assembly, homodimer. Zn(2+) is required as a cofactor.

The catalysed reaction is cytidine + H2O + H(+) = uridine + NH4(+). It catalyses the reaction 2'-deoxycytidine + H2O + H(+) = 2'-deoxyuridine + NH4(+). Its function is as follows. This enzyme scavenges exogenous and endogenous cytidine and 2'-deoxycytidine for UMP synthesis. The protein is Cytidine deaminase of Vibrio vulnificus (strain YJ016).